A 187-amino-acid polypeptide reads, in one-letter code: Elongation factor P (187 aa).

It belongs to the elongation factor P family.

The protein resides in the cytoplasm. The protein operates within protein biosynthesis; polypeptide chain elongation. Functionally, involved in peptide bond synthesis. Stimulates efficient translation and peptide-bond synthesis on native or reconstituted 70S ribosomes in vitro. Probably functions indirectly by altering the affinity of the ribosome for aminoacyl-tRNA, thus increasing their reactivity as acceptors for peptidyl transferase. The protein is Elongation factor P of Sphingopyxis alaskensis (strain DSM 13593 / LMG 18877 / RB2256) (Sphingomonas alaskensis).